Reading from the N-terminus, the 166-residue chain is NAD(P)H-quinone oxidoreductase subunit I, chloroplastic (166 aa).

4Fe-4S ferredoxin-type domains lie at Gly55–Lys84 and Leu95–Glu124. [4Fe-4S] cluster contacts are provided by Cys64, Cys67, Cys70, Cys74, Cys104, Cys107, Cys110, and Cys114.

Belongs to the complex I 23 kDa subunit family. In terms of assembly, NDH is composed of at least 16 different subunits, 5 of which are encoded in the nucleus. It depends on [4Fe-4S] cluster as a cofactor.

It is found in the plastid. It localises to the chloroplast thylakoid membrane. It carries out the reaction a plastoquinone + NADH + (n+1) H(+)(in) = a plastoquinol + NAD(+) + n H(+)(out). The catalysed reaction is a plastoquinone + NADPH + (n+1) H(+)(in) = a plastoquinol + NADP(+) + n H(+)(out). NDH shuttles electrons from NAD(P)H:plastoquinone, via FMN and iron-sulfur (Fe-S) centers, to quinones in the photosynthetic chain and possibly in a chloroplast respiratory chain. The immediate electron acceptor for the enzyme in this species is believed to be plastoquinone. Couples the redox reaction to proton translocation, and thus conserves the redox energy in a proton gradient. This is NAD(P)H-quinone oxidoreductase subunit I, chloroplastic from Ambrosia trifida (Giant ragweed).